The primary structure comprises 411 residues: UDP-N-acetylmuramoylalanine--D-glutamate ligase (411 aa).

Residue 92-98 coordinates ATP; sequence GTDGKST.

The protein belongs to the MurCDEF family.

The protein resides in the cytoplasm. The catalysed reaction is UDP-N-acetyl-alpha-D-muramoyl-L-alanine + D-glutamate + ATP = UDP-N-acetyl-alpha-D-muramoyl-L-alanyl-D-glutamate + ADP + phosphate + H(+). It functions in the pathway cell wall biogenesis; peptidoglycan biosynthesis. In terms of biological role, cell wall formation. Catalyzes the addition of glutamate to the nucleotide precursor UDP-N-acetylmuramoyl-L-alanine (UMA). The polypeptide is UDP-N-acetylmuramoylalanine--D-glutamate ligase (Hydrogenobaculum sp. (strain Y04AAS1)).